A 142-amino-acid chain; its full sequence is HTH-type transcriptional regulator MntR (142 aa).

In terms of domain architecture, HTH dtxR-type spans 1-63 (MPTPSMEDYI…YEKYRGLVLT (63 aa)). Mn(2+) is bound by residues Asp8, Glu11, His77, Glu99, Glu102, and His103.

The protein belongs to the DtxR/MntR family. In terms of assembly, homodimer.

It is found in the cytoplasm. Its activity is regulated as follows. DNA binding is strongly activated by Mn(2+). Its function is as follows. Central regulator of manganese homeostasis. This Bacillus mycoides (strain KBAB4) (Bacillus weihenstephanensis) protein is HTH-type transcriptional regulator MntR.